The chain runs to 499 residues: Glycerol kinase (499 aa).

Thr-13 contributes to the ADP binding site. ATP is bound by residues Thr-13, Thr-14, and Ser-15. Sn-glycerol 3-phosphate is bound at residue Thr-13. An ADP-binding site is contributed by Arg-17. Residues Arg-83, Glu-84, Tyr-135, and Asp-244 each coordinate sn-glycerol 3-phosphate. The glycerol site is built by Arg-83, Glu-84, Tyr-135, Asp-244, and Gln-245. ADP contacts are provided by Thr-266 and Gly-310. The ATP site is built by Thr-266, Gly-310, Gln-314, and Gly-411. ADP is bound by residues Gly-411 and Asn-415.

It belongs to the FGGY kinase family.

It carries out the reaction glycerol + ATP = sn-glycerol 3-phosphate + ADP + H(+). Its pathway is polyol metabolism; glycerol degradation via glycerol kinase pathway; sn-glycerol 3-phosphate from glycerol: step 1/1. Its activity is regulated as follows. Inhibited by fructose 1,6-bisphosphate (FBP). Its function is as follows. Key enzyme in the regulation of glycerol uptake and metabolism. Catalyzes the phosphorylation of glycerol to yield sn-glycerol 3-phosphate. This chain is Glycerol kinase, found in Pseudothermotoga lettingae (strain ATCC BAA-301 / DSM 14385 / NBRC 107922 / TMO) (Thermotoga lettingae).